The sequence spans 87 residues: Small ribosomal subunit protein bS20 (87 aa).

Belongs to the bacterial ribosomal protein bS20 family.

Functionally, binds directly to 16S ribosomal RNA. The protein is Small ribosomal subunit protein bS20 of Neorickettsia sennetsu (strain ATCC VR-367 / Miyayama) (Ehrlichia sennetsu).